Consider the following 290-residue polypeptide: UPF0761 membrane protein YihY (290 aa).

A run of 6 helical transmembrane segments spans residues 44 to 64, 104 to 124, 140 to 160, 183 to 203, 210 to 230, and 244 to 264; these read LLSL…FPMF, VGAC…DSAL, FAVY…SLAI, ILPL…VPTT, ALVG…GFAL, and VLAV…IVLL.

It belongs to the UPF0761 family.

The protein resides in the cell inner membrane. In Salmonella agona (strain SL483), this protein is UPF0761 membrane protein YihY.